Reading from the N-terminus, the 56-residue chain is Small ribosomal subunit protein uS14 (56 aa).

Residues Cys21, Cys24, Cys39, and Cys42 each coordinate Zn(2+).

Belongs to the universal ribosomal protein uS14 family. Component of the small ribosomal subunit (SSU). Mature N.crassa ribosomes consist of a small (40S) and a large (60S) subunit. The 40S small subunit contains 1 molecule of ribosomal RNA (18S rRNA) and at least 32 different proteins. The large 60S subunit contains 3 rRNA molecules (26S, 5.8S and 5S rRNA) and at least 42 different proteins. It depends on Zn(2+) as a cofactor.

It is found in the cytoplasm. Its function is as follows. Component of the ribosome, a large ribonucleoprotein complex responsible for the synthesis of proteins in the cell. The small ribosomal subunit (SSU) binds messenger RNAs (mRNAs) and translates the encoded message by selecting cognate aminoacyl-transfer RNA (tRNA) molecules. The large subunit (LSU) contains the ribosomal catalytic site termed the peptidyl transferase center (PTC), which catalyzes the formation of peptide bonds, thereby polymerizing the amino acids delivered by tRNAs into a polypeptide chain. The nascent polypeptides leave the ribosome through a tunnel in the LSU and interact with protein factors that function in enzymatic processing, targeting, and the membrane insertion of nascent chains at the exit of the ribosomal tunnel. This Neurospora crassa (strain ATCC 24698 / 74-OR23-1A / CBS 708.71 / DSM 1257 / FGSC 987) protein is Small ribosomal subunit protein uS14 (rps-29).